Consider the following 2301-residue polypeptide: Genome polyprotein (2301 aa).

Residues 3–14 fold into a zinc finger; it reads CKHGYPDVCPIC. Positions 30–46 are acidic; sequence DGEWFPTDLLCVDLDDD. The tract at residues 60–73 is theilo; the sequence is MEWTDLPLVRDIVM. The N-myristoyl glycine; by host moiety is linked to residue glycine 77. Cysteine 501 and cysteine 503 are disulfide-bonded. The tract at residues 1039–1045 is host EIF4E binding; sequence YYKQRLI. An SF3 helicase domain is found at 1281–1446; that stretch reads IPLASLCEKF…CTTSNGMLDI (166 aa). Residue 1310–1317 participates in ATP binding; that stretch reads GAAGQGKS. Tyrosine 1606 is subject to O-(5'-phospho-RNA)-tyrosine. Residues 1634–1827 enclose the Peptidase C3 domain; it reads NPVMDFELFC…AATIITRELI (194 aa). Residues histidine 1678, aspartate 1712, and cysteine 1791 each act as for protease 3C activity in the active site. The RdRp catalytic domain occupies 2069-2187; sequence NYVYDVDYSN…GTNYQIDFNL (119 aa). Catalysis depends on for RdRp activity residues aspartate 2075 and aspartate 2173.

The protein belongs to the picornaviruses polyprotein family. As to quaternary structure, interacts with host EIF4E. Interacts with the leader protein. In terms of assembly, interacts with host RAN; the complex L-RAN recruits cellular kinases responsible for the L-induced nucleocytoplasmic trafficking inhibition. The complex L-RAN can further bind to the host exportins XPO1/CRM1 and CSE1L/CAS. Interacts with the protein 2A. Interacts with host RNASEL; this interaction prevents RNASEL activation by its substrate 2'-5' oligoadenylates. Phosphorylated. In terms of processing, specific enzymatic cleavages by the viral protease in vivo yield a variety of precursors and mature proteins. The polyprotein seems to be cotranslationally cleaved at the 2A/2B junction by a ribosomal skip from one codon to the next without formation of a peptide bond. This process would release the P1-2A peptide from the translational complex. Post-translationally, during virion maturation, immature virions are rendered infectious following cleavage of VP0 into VP4 and VP2. This maturation seems to be an autocatalytic event triggered by the presence of RNA in the capsid and is followed by a conformational change of the particle. Uridylylated by the polymerase and is covalently linked to the 5'-end of genomic RNA. This uridylylated form acts as a nucleotide-peptide primer for the polymerase. In terms of processing, myristoylation is required during RNA encapsidation and formation of the mature virus particle.

The protein resides in the virion. The protein localises to the host cytoplasm. It is found in the host nucleus. It localises to the host nucleolus. Its subcellular location is the host cytoplasmic vesicle membrane. It catalyses the reaction RNA(n) + a ribonucleoside 5'-triphosphate = RNA(n+1) + diphosphate. The enzyme catalyses ATP + H2O = ADP + phosphate + H(+). It carries out the reaction Selective cleavage of Gln-|-Gly bond in the poliovirus polyprotein. In other picornavirus reactions Glu may be substituted for Gln, and Ser or Thr for Gly.. Forms a complex with host RAN and probably binds to exportins carrying activated MAPK in order to mediate the hyperphosphorylation of host Phe/Gly containing nuclear pore proteins (Nups) resulting in cessation of active nucleocytoplasmic transport. Proteins with NLS signals fail to import, cellular mRNAs fail to export, and some proteins small enough for diffusion are not retained anymore (efflux). The resulting inhibition of cellular protein synthesis serves to ensure maximal viral gene expression and to evade host immune response. The leader protein also inhibits host interferon regulatory factor 3 (IRF3) dimerization, thereby blocking the transcriptional activation of IFN genes. Binds to host RNase L thereby preventing its activation by 2'-5' oligoadenylates in order to counteract the antiviral interferon-inducible OAS/RNase L pathway. Functionally, forms an icosahedral capsid of pseudo T=3 symmetry with capsid proteins VP2 and VP3. Together they form an icosahedral capsid composed of 60 copies of each VP1, VP2, and VP3, with a diameter of approximately 300 Angstroms. VP4 lies on the inner surface of the protein shell formed by VP1, VP2 and VP3. All the three latter proteins contain a beta-sheet structure called beta-barrel jelly roll. VP1 is situated at the 12 fivefold axes, whereas VP2 and VP3 are located at the quasi-sixfold axes. Its function is as follows. Lies on the inner surface of the capsid shell. After binding to the host receptor, the capsid undergoes conformational changes. Capsid protein VP4 is released, capsid protein VP1 N-terminus is externalized, and together, they shape a pore in the host membrane through which the viral genome is translocated into the host cell cytoplasm. After genome has been released, the channel shrinks. In terms of biological role, VP0 precursor is a component of immature procapsids. Involved in host translation shutoff by inhibiting cap-dependent mRNA translation. Nuclear localization is required for this function. The resulting inhibition of cellular protein synthesis serves to ensure maximal viral gene expression and to evade host immune response. Inhibits the phosphorylation of the leader protein. Functionally, affects membrane integrity and causes an increase in membrane permeability. Its function is as follows. Associates with and induces structural rearrangements of intracellular membranes. It displays RNA-binding, nucleotide binding and NTPase activities. In terms of biological role, serves as membrane anchor via its hydrophobic domain. Forms a primer, VPg-pU, which is utilized by the polymerase for the initiation of RNA chains. Functionally, cysteine protease that generates mature viral proteins from the precursor polyprotein. In addition to its proteolytic activity, it binds to viral RNA, and thus influences viral genome replication. RNA and substrate cooperatively bind to the protease. Cleaves host PABP1, this cleavage is important for viral replication. Its function is as follows. Replicates the genomic and antigenomic RNAs by recognizing replications specific signals. Performs VPg uridylylation. The polypeptide is Genome polyprotein (Theiler's murine encephalomyelitis virus (strain DA) (TMEV)).